A 165-amino-acid chain; its full sequence is UPF0303 protein Bamb_1459 (165 aa).

It belongs to the UPF0303 family.

This chain is UPF0303 protein Bamb_1459, found in Burkholderia ambifaria (strain ATCC BAA-244 / DSM 16087 / CCUG 44356 / LMG 19182 / AMMD) (Burkholderia cepacia (strain AMMD)).